The following is a 39-amino-acid chain: Contryphan-Cal1 (39 aa).

The N-terminal stretch at 1–20 is a signal peptide; that stretch reads MTRTAVLLLTLLFLVAMAAS. An intrachain disulfide couples Cys29 to Cys35.

As to expression, expressed by the venom duct.

The protein resides in the secreted. In terms of biological role, probable neurotoxin. In Californiconus californicus (California cone), this protein is Contryphan-Cal1.